A 463-amino-acid polypeptide reads, in one-letter code: Ribulose bisphosphate carboxylase (463 aa).

Asn-116 contributes to the substrate binding site. The Proton acceptor role is filled by Lys-171. Lys-173 contributes to the substrate binding site. The Mg(2+) site is built by Lys-196, Asp-198, and Glu-199. Lys-196 is subject to N6-carboxylysine. His-294 (proton acceptor) is an active-site residue. Substrate contacts are provided by Arg-295, His-328, and Ser-375.

The protein belongs to the RuBisCO large chain family. Type II subfamily. Homodimer. Requires Mg(2+) as cofactor.

The catalysed reaction is 2 (2R)-3-phosphoglycerate + 2 H(+) = D-ribulose 1,5-bisphosphate + CO2 + H2O. The enzyme catalyses D-ribulose 1,5-bisphosphate + O2 = 2-phosphoglycolate + (2R)-3-phosphoglycerate + 2 H(+). RuBisCO catalyzes two reactions: the carboxylation of D-ribulose 1,5-bisphosphate, the primary event in carbon dioxide fixation, as well as the oxidative fragmentation of the pentose substrate. Both reactions occur simultaneously and in competition at the same active site. The protein is Ribulose bisphosphate carboxylase of Hydrogenovibrio marinus.